A 322-amino-acid polypeptide reads, in one-letter code: Polyisoprenyl-teichoic acid--peptidoglycan teichoic acid transferase TagT (322 aa).

Residues 1–19 are Cytoplasmic-facing; the sequence is MEERSQRRKKKRKLKKWVK. The helical; Signal-anchor for type II membrane protein transmembrane segment at 20–40 threads the bilayer; that stretch reads VVAGLMAFLVIAAGSVGAYAF. Residues 41–322 lie on the Extracellular side of the membrane; it reads VKLNNASKEA…KKELQNDLGV (282 aa).

This sequence belongs to the LytR/CpsA/Psr (LCP) family. As to quaternary structure, interacts with MreB.

The protein resides in the cell membrane. It functions in the pathway cell wall biogenesis. Its function is as follows. May catalyze the final step in cell wall teichoic acid biosynthesis, the transfer of the anionic cell wall polymers (APs) from their lipid-linked precursor to the cell wall peptidoglycan (PG). In Bacillus subtilis (strain 168), this protein is Polyisoprenyl-teichoic acid--peptidoglycan teichoic acid transferase TagT.